The chain runs to 321 residues: Phospho-N-acetylmuramoyl-pentapeptide-transferase (321 aa).

Helical transmembrane passes span 4–24 (MVWAFIVASAVGLLIGPWLIP), 51–71 (TMGGLLFLIAVPMAVLVTVGF), 75–95 (SGVLLLGLLGFGLIGFLDDYI), 109–129 (QKFTGQLILSLILIYGVVYGI), 139–159 (GFEVWWDAGALYYPLALLLIV), 173–193 (GLAAGMTFWVALAFAAIASAG), 195–215 (SDVTAAFAAALAGGCIGFLFF), 222–242 (MFMGDTGSLALGGAVATLALL), 247–267 (LILPVLGAVFVAETLSVILQV), and 297–317 (VVYTFWAASLISAFLGVLLAM).

This sequence belongs to the glycosyltransferase 4 family. MraY subfamily. Mg(2+) serves as cofactor.

The protein resides in the cell membrane. It catalyses the reaction UDP-N-acetyl-alpha-D-muramoyl-L-alanyl-gamma-D-glutamyl-meso-2,6-diaminopimeloyl-D-alanyl-D-alanine + di-trans,octa-cis-undecaprenyl phosphate = di-trans,octa-cis-undecaprenyl diphospho-N-acetyl-alpha-D-muramoyl-L-alanyl-D-glutamyl-meso-2,6-diaminopimeloyl-D-alanyl-D-alanine + UMP. It functions in the pathway cell wall biogenesis; peptidoglycan biosynthesis. Its function is as follows. Catalyzes the initial step of the lipid cycle reactions in the biosynthesis of the cell wall peptidoglycan: transfers peptidoglycan precursor phospho-MurNAc-pentapeptide from UDP-MurNAc-pentapeptide onto the lipid carrier undecaprenyl phosphate, yielding undecaprenyl-pyrophosphoryl-MurNAc-pentapeptide, known as lipid I. The polypeptide is Phospho-N-acetylmuramoyl-pentapeptide-transferase (Heliobacterium modesticaldum (strain ATCC 51547 / Ice1)).